The sequence spans 255 residues: 1-(5-phosphoribosyl)-5-[(5-phosphoribosylamino)methylideneamino] imidazole-4-carboxamide isomerase (255 aa).

Aspartate 8 (proton acceptor) is an active-site residue. Catalysis depends on aspartate 129, which acts as the Proton donor.

This sequence belongs to the HisA/HisF family.

Its subcellular location is the cytoplasm. The catalysed reaction is 1-(5-phospho-beta-D-ribosyl)-5-[(5-phospho-beta-D-ribosylamino)methylideneamino]imidazole-4-carboxamide = 5-[(5-phospho-1-deoxy-D-ribulos-1-ylimino)methylamino]-1-(5-phospho-beta-D-ribosyl)imidazole-4-carboxamide. It functions in the pathway amino-acid biosynthesis; L-histidine biosynthesis; L-histidine from 5-phospho-alpha-D-ribose 1-diphosphate: step 4/9. This is 1-(5-phosphoribosyl)-5-[(5-phosphoribosylamino)methylideneamino] imidazole-4-carboxamide isomerase from Prochlorococcus marinus (strain MIT 9301).